We begin with the raw amino-acid sequence, 433 residues long: Mannan endo-1,4-beta-mannosidase 2 (433 aa).

A signal peptide spans Met1–Gly28. Residue Asn46 is glycosylated (N-linked (GlcNAc...) asparagine). Trp98 is a substrate binding site. Asn169 is a glycosylation site (N-linked (GlcNAc...) asparagine). Asn214 lines the substrate pocket. Glu215 acts as the Proton donor in catalysis. Tyr295 serves as a coordination point for substrate. Glu335 serves as the catalytic Nucleophile. Substrate is bound at residue Trp377.

The protein belongs to the glycosyl hydrolase 5 (cellulase A) family. In terms of tissue distribution, expressed in roots, stems, leaves and seeds.

The protein localises to the secreted. The catalysed reaction is Random hydrolysis of (1-&gt;4)-beta-D-mannosidic linkages in mannans, galactomannans and glucomannans.. This is Mannan endo-1,4-beta-mannosidase 2 (MAN2) from Arabidopsis thaliana (Mouse-ear cress).